Consider the following 155-residue polypeptide: MDYEIRQEQKRKIAGFHMVGPWEHTVKQGFKQLMMWVDGKQIVPIEWIAVYYDNPDEVPAEKLRCDTVVSVAENFVLPDNSEGVIVTEIEGGEYATAVARVEDHDFATPWYQFFDALLQDSAYQITSEPCFETYLNNGVEDGYWDIEMYIPVRRK.

This sequence belongs to the DNA gyrase inhibitor family. In terms of assembly, interacts with DNA gyrase.

Its subcellular location is the cytoplasm. Inhibits the supercoiling activity of DNA gyrase. Acts by inhibiting DNA gyrase at an early step, prior to (or at the step of) binding of DNA by the gyrase. It protects cells against toxins that target DNA gyrase, by inhibiting activity of these toxins and reducing the formation of lethal double-strand breaks in the cell. The chain is DNA gyrase inhibitor from Salmonella arizonae (strain ATCC BAA-731 / CDC346-86 / RSK2980).